The following is a 445-amino-acid chain: IYRKHLKYIGATSPGELCNESYVAGVGTYPEDIGLEGLSMVITQLIGLHIGLTYDDVDNCSCPRAPCIMQPEALSSSGMKTFSNCSVHDYTHYASKLDMQCLGDLSNVLQPKQSVCGNGIVEGSEECDCGNETECQFKECCNHETCKLKGSAQCGSGTCCTPKCELSAAGTPCRKAVDPECDFTEYCDGSSSHCVPDTFALDGHLCRLGSAYCYNGRCQALNDQCVSLFGKGSQGASYACFEKVNSQRENLANCDSKNSYSLPCGQKDVLCGKLACFRPNKNYKSSTQSVLYSYVHGSVCLSIPPGLSMRSDGKDNAYVADGTVCGPQMYCINGSCKEVNFTGNDCNAAKKCKGNGICNNFGHCQCFPDYRPPDCNLQIGSPGGSIDDGNLLRTDSALATKRLSQHADSWVILGFFIFLPFIMTLFLGIIKRNERKIVPQKEQER.

The Peptidase M12B domain maps to 1–106 (IYRKHLKYIG…LDMQCLGDLS (106 aa)). Residues 1–409 (IYRKHLKYIG…TKRLSQHADS (409 aa)) lie on the Extracellular side of the membrane. Cystine bridges form between Cys-18–Cys-101, Cys-60–Cys-85, and Cys-62–Cys-67. N-linked (GlcNAc...) asparagine glycans are attached at residues Asn-19 and Asn-59. N-linked (GlcNAc...) asparagine glycosylation is found at Asn-84 and Asn-131. The region spanning 113-202 (QSVCGNGIVE…HCVPDTFALD (90 aa)) is the Disintegrin domain. Cys-173 and Cys-194 are joined by a disulfide. 2 N-linked (GlcNAc...) asparagine glycosylation sites follow: Asn-333 and Asn-340. One can recognise an EGF-like domain in the interval 342 to 376 (TGNDCNAAKKCKGNGICNNFGHCQCFPDYRPPDCN). Cystine bridges form between Cys-346-Cys-358, Cys-352-Cys-364, and Cys-366-Cys-375. Residues 410–430 (WVILGFFIFLPFIMTLFLGII) traverse the membrane as a helical segment. Residues 431–445 (KRNERKIVPQKEQER) are Cytoplasmic-facing.

In terms of processing, the prodomain and the metalloprotease-like domain are cleaved during the epididymal maturation of the spermatozoa. As to expression, expressed specifically in testis.

The protein localises to the membrane. Functionally, sperm surface membrane protein that may be involved in spermatogenesis and fertilization. This is a non catalytic metalloprotease-like protein. The polypeptide is Disintegrin and metalloproteinase domain-containing protein 18 (Adam18) (Rattus norvegicus (Rat)).